We begin with the raw amino-acid sequence, 1184 residues long: DNA-directed RNA polymerase subunit beta (1184 aa).

Positions 1160 to 1184 (DDDFTNQNDAFNIVQPENAATEKTE) are disordered.

This sequence belongs to the RNA polymerase beta chain family. As to quaternary structure, the RNAP catalytic core consists of 2 alpha, 1 beta, 1 beta' and 1 omega subunit. When a sigma factor is associated with the core the holoenzyme is formed, which can initiate transcription.

The enzyme catalyses RNA(n) + a ribonucleoside 5'-triphosphate = RNA(n+1) + diphosphate. In terms of biological role, DNA-dependent RNA polymerase catalyzes the transcription of DNA into RNA using the four ribonucleoside triphosphates as substrates. The protein is DNA-directed RNA polymerase subunit beta of Listeria innocua serovar 6a (strain ATCC BAA-680 / CLIP 11262).